A 93-amino-acid polypeptide reads, in one-letter code: UPF0175 protein AF_0100 (93 aa).

The protein belongs to the UPF0175 family.

In Archaeoglobus fulgidus (strain ATCC 49558 / DSM 4304 / JCM 9628 / NBRC 100126 / VC-16), this protein is UPF0175 protein AF_0100.